The primary structure comprises 380 residues: Dynactin subunit 2 (380 aa).

A disordered region spans residues 1-40 (MADPKFQNLPGIAYDQPDVYETPDDPETDTSDYYEEEPEN). Over residues 21 to 40 (ETPDDPETDTSDYYEEEPEN) the composition is skewed to acidic residues. 2 coiled-coil regions span residues 100 to 135 (VQKC…QSYD) and 353 to 377 (ETFA…TAIS).

The protein belongs to the dynactin subunit 2 family. In terms of assembly, subunit of dynactin, a multiprotein complex associated with dynein.

The protein resides in the cytoplasm. It is found in the cytoskeleton. It localises to the membrane. Modulates cytoplasmic dynein binding to an organelle, and plays a role in prometaphase chromosome alignment and spindle organization during mitosis. May play a role in synapse formation during brain development. The sequence is that of Dynactin subunit 2 from Drosophila pseudoobscura pseudoobscura (Fruit fly).